The sequence spans 460 residues: UDP-N-acetylmuramate--L-alanine ligase (460 aa).

119–125 (GSHGKTT) serves as a coordination point for ATP.

This sequence belongs to the MurCDEF family.

It localises to the cytoplasm. It catalyses the reaction UDP-N-acetyl-alpha-D-muramate + L-alanine + ATP = UDP-N-acetyl-alpha-D-muramoyl-L-alanine + ADP + phosphate + H(+). Its pathway is cell wall biogenesis; peptidoglycan biosynthesis. Its function is as follows. Cell wall formation. The protein is UDP-N-acetylmuramate--L-alanine ligase of Alkaliphilus metalliredigens (strain QYMF).